Reading from the N-terminus, the 517-residue chain is Acetylcholine receptor subunit delta (517 aa).

The first 21 residues, 1 to 21, serve as a signal peptide directing secretion; the sequence is MEGPVLTLGLLAALAVCGSWG. Topologically, residues 22–245 are extracellular; sequence LNEEERLIRH…ITFYLIIRRK (224 aa). N-linked (GlcNAc...) asparagine glycosylation is found at Asn97 and Asn164. Cysteines 151 and 165 form a disulfide. Helical transmembrane passes span 246–270, 278–299, and 312–333; these read PLFY…VFYL, TSVA…SKRL, and FLLF…VLNI. Residues 334-471 are Cytoplasmic-facing; the sequence is HFRTPSTHVL…WNRVARTVDR (138 aa). Tyr390 carries the phosphotyrosine; by Tyr-kinases modification. A helical membrane pass occupies residues 472–490; the sequence is LCLFVVTPVMVVGTAWIFL.

This sequence belongs to the ligand-gated ion channel (TC 1.A.9) family. Acetylcholine receptor (TC 1.A.9.1) subfamily. Delta/CHRND sub-subfamily. Pentamer of two alpha chains, and one each of the beta, delta, and gamma (in immature muscle) or epsilon (in mature muscle) chains. The muscle heteropentamer composed of alpha-1, beta-1, delta, epsilon subunits interacts with the alpha-conotoxin ImII.

The protein resides in the postsynaptic cell membrane. The protein localises to the cell membrane. The catalysed reaction is K(+)(in) = K(+)(out). It carries out the reaction Na(+)(in) = Na(+)(out). Functionally, after binding acetylcholine, the AChR responds by an extensive change in conformation that affects all subunits and leads to opening of an ion-conducting channel across the plasma membrane. The polypeptide is Acetylcholine receptor subunit delta (Homo sapiens (Human)).